A 243-amino-acid polypeptide reads, in one-letter code: MFSSTYLLAIIALAVSSVFAAGPTAVPLGTAGNYAILASAGVSTVPQSVITGAVGLSPAAATFLTGFSLTMSSTGTFSTSTQVTGQLTAADYGTPTPSILTTAIGDMGTAYVNAATRSGPNFLEIYTGALGGKILPPGLYKWTSPVGASADFTIIGTSTDTWIFQIAGTLGLAAGKKIILAGGAQAKNIVWVVAGAVSIEAGAKFEGVILAKTAVTLKTGSSLNGRILSQTAVALQKATVVQK.

Residues 1 to 20 (MFSSTYLLAIIALAVSSVFA) form the signal peptide.

It belongs to the ice-binding protein family.

Its subcellular location is the secreted. Binds to the surface of ice crystals. Inhibits growth of the ice crystals. Has antifreeze activity for survival under snow cover. Has high thermal hysteresis (TH) activity, which is the ability to lower the freezing point of an aqueous solution below its melting point, and thus the freezing of the cell fluid can be prevented protecting the organism from ice damage. The TH activity of this protein is 2.0 degrees Celsius at 0.11 mM. This is Ice-binding protein K1-A from Typhula ishikariensis (Gray snow mold fungus).